We begin with the raw amino-acid sequence, 444 residues long: Jacalin-related lectin 42 (444 aa).

N-acetylalanine is present on alanine 2. 3 consecutive Jacalin-type lectin domains span residues 2-143 (ALMV…YYIR), 146-289 (ATKS…YYAP), and 297-441 (TEKL…HVIP).

It belongs to the jacalin lectin family.

The polypeptide is Jacalin-related lectin 42 (JAL42) (Arabidopsis thaliana (Mouse-ear cress)).